The primary structure comprises 1135 residues: Retinoblastoma-like protein 2 (1135 aa).

Residues 1–43 form a disordered region; sequence MASGGNQSPPPPPAAAASSEEEEEDGDAADRAQPAGSPSHQIQ. Position 410 is a phosphoserine (Ser410). Phosphothreonine is present on Thr414. The segment at 414–613 is domain A; the sequence is TPVSTAAHSL…DRIRDNENRV (200 aa). The interval 414 to 1021 is pocket; binds E1A; sequence TPVSTAAHSL…QAFAMKYSQA (608 aa). An O-linked (GlcNAc) serine glycan is attached at Ser417. A spacer region spans residues 614-824; the sequence is PTCEEVMPPQ…PGQPLTSSSI (211 aa). Ser636 is subject to Phosphoserine. Phosphothreonine is present on Thr639. A phosphoserine mark is found at Ser659, Ser669, Ser684, Ser942, Ser946, Ser960, Ser965, and Ser967. Polar residues-rich tracts occupy residues 661–674, 683–692, 935–950, and 958–969; these read TTLY…TVST, DSPSEGSTSG, SGSS…PTEL, and DSSPVMRSNSTL. 2 disordered regions span residues 661-698 and 930-994; these read TTLY…PPQP and GKRR…VEEE. Residues 825-1021 form a domain B region; the sequence is RPRKTSSLAL…QAFAMKYSQA (197 aa). Thr968 carries the phosphothreonine modification. Pro residues predominate over residues 971 to 981; sequence VPQPSSAPPTP. Phosphoserine is present on residues Ser975 and Ser976. Position 980 is a phosphothreonine (Thr980). Phosphoserine is present on residues Ser1031, Ser1064, Ser1076, and Ser1108.

The protein belongs to the retinoblastoma protein (RB) family. As to quaternary structure, interacts with AATF and RINT1. Component of the DREAM complex (also named LINC complex) at least composed of E2F4, E2F5, LIN9, LIN37, LIN52, LIN54, MYBL1, MYBL2, RBL1, RBL2, RBBP4, TFDP1 and TFDP2. The complex exists in quiescent cells where it represses cell cycle-dependent genes. It dissociates in S phase when LIN9, LIN37, LIN52 and LIN54 form a subcomplex that binds to MYBL2. Interacts with USP4. Interacts with KMT5B, KMT5C and USP4. Interacts with PML. Interacts with RBBP9. Interacts with CD53. Post-translationally, during G0 and early G1 phase of the cell cycle, phosphorylated on Ser-636 and on 5 sites within the domain B. Phosphorylation on Ser-669 in G1 leads to its ubiquitin-dependent proteolysis.

It is found in the nucleus. Functionally, key regulator of entry into cell division. Directly involved in heterochromatin formation by maintaining overall chromatin structure and, in particular, that of constitutive heterochromatin by stabilizing histone methylation. Recruits and targets histone methyltransferases KMT5B and KMT5C, leading to epigenetic transcriptional repression. Controls histone H4 'Lys-20' trimethylation. Probably acts as a transcription repressor by recruiting chromatin-modifying enzymes to promoters. Potent inhibitor of E2F-mediated trans-activation, associates preferentially with E2F5. Binds to cyclins A and E. Binds to and may be involved in the transforming capacity of the adenovirus E1A protein. May act as a tumor suppressor. This chain is Retinoblastoma-like protein 2 (Rbl2), found in Mus musculus (Mouse).